The primary structure comprises 217 residues: NADPH-dependent 3-demethoxyubiquinone 3-hydroxylase, mitochondrial (217 aa).

2 consecutive repeat copies span residues I49–M130 and G131–V217. The tract at residues I49–V217 is 2 X approximate tandem repeats. R52 serves as a coordination point for NADH. Residues E61, E91, H94, E143, E178, and H181 each contribute to the Fe cation site. An NADH-binding site is contributed by R216.

It belongs to the COQ7 family. Component of a multi-subunit COQ enzyme complex. The cofactor is Fe cation.

The protein resides in the mitochondrion inner membrane. It carries out the reaction a 5-methoxy-2-methyl-3-(all-trans-polyprenyl)benzoquinone + NADH + O2 = a 3-demethylubiquinone + NAD(+) + H2O. Its pathway is cofactor biosynthesis; ubiquinone biosynthesis. Catalyzes the hydroxylation of the 5-methoxy-2-methyl-3-(all-trans-polyprenyl)benzoquinone at the C6 position and participates in the biosynthesis of ubiquinone. Catalyzes the reaction through a substrate-mediated reduction pathway, whereby NADH shuttles electrons to 5-methoxy-2-methyl-3-(all-trans-decaprenyl)benzoquinone, which then transfers the electrons to the two Fe(3+) centers. The binding of 5-methoxy-2-methyl-3-(all-trans-polyprenyl)benzoquinone (DMQn) mediates reduction of the diiron center by nicotinamide adenine dinucleotide (NADH) and initiates oxygen activation for subsequent DMQ hydroxylation. Also has a structural role in the COQ enzyme complex, stabilizing other COQ polypeptides. This Dictyostelium discoideum (Social amoeba) protein is NADPH-dependent 3-demethoxyubiquinone 3-hydroxylase, mitochondrial.